The primary structure comprises 377 residues: tRNA-specific 2-thiouridylase MnmA (377 aa).

Residues 8–15 and Met34 each bind ATP; that span reads GMSGGVDS. The segment at 94–96 is interaction with target base in tRNA; sequence NPD. Catalysis depends on Cys99, which acts as the Nucleophile. An intrachain disulfide couples Cys99 to Cys201. Gly123 contributes to the ATP binding site. Residues 151–153 are interaction with tRNA; the sequence is KDQ. Cys201 (cysteine persulfide intermediate) is an active-site residue. Residues 315 to 316 are interaction with tRNA; sequence RY.

The protein belongs to the MnmA/TRMU family.

The protein localises to the cytoplasm. It catalyses the reaction S-sulfanyl-L-cysteinyl-[protein] + uridine(34) in tRNA + AH2 + ATP = 2-thiouridine(34) in tRNA + L-cysteinyl-[protein] + A + AMP + diphosphate + H(+). Its function is as follows. Catalyzes the 2-thiolation of uridine at the wobble position (U34) of tRNA, leading to the formation of s(2)U34. The sequence is that of tRNA-specific 2-thiouridylase MnmA from Acinetobacter baumannii (strain AB307-0294).